Here is a 416-residue protein sequence, read N- to C-terminus: Phosphoglycerate kinase (416 aa).

Valine 22, aspartate 23, phenylalanine 24, asparagine 25, glutamine 37, arginine 38, serine 61, histidine 62, glycine 64, arginine 65, leucine 120, arginine 121, histidine 168, and arginine 169 together coordinate (2R)-3-phosphoglycerate. An ADP-binding site is contributed by glycine 212. A CDP-binding site is contributed by glycine 212. AMP contacts are provided by alanine 213 and lysine 214. ATP is bound at residue alanine 213. Alanine 213 contributes to the Mg(2+) binding site. Aspartate 217 provides a ligand contact to CDP. Aspartate 217 is a binding site for Mg(2+). Lysine 218 is an AMP binding site. Residue lysine 218 coordinates ATP. Glycine 236 serves as a coordination point for ADP. Position 236 (glycine 236) interacts with CDP. AMP contacts are provided by glycine 237 and glycine 311. 2 residues coordinate ATP: glycine 237 and glycine 311. CDP is bound by residues glycine 336 and phenylalanine 341. Phenylalanine 341 contributes to the ADP binding site. Position 342 (glutamate 342) interacts with AMP. ATP contacts are provided by glutamate 342, aspartate 373, and threonine 374. Position 373 (aspartate 373) interacts with Mg(2+).

This sequence belongs to the phosphoglycerate kinase family. In terms of assembly, monomer. The cofactor is Mg(2+). In terms of tissue distribution, expressed in all cells of the worm (at protein level), higher expression in the cells associated with the tubercles (tegumental modifications), the muscle and along the tegument.

The enzyme catalyses (2R)-3-phosphoglycerate + ATP = (2R)-3-phospho-glyceroyl phosphate + ADP. The protein operates within carbohydrate degradation; glycolysis; pyruvate from D-glyceraldehyde 3-phosphate: step 2/5. Functionally, involved in the seventh step in glycolysis. Catalyzes the conversion of 1,3-bisphosphoglycerate ((2R)-3-phospho-glyceroyl phosphate) to 3-phosphoglycerate ((2R)-3-phosphoglycerate) and results in the formation of ATP. Associated with the tegument to provide the energy needed for the tegumental repair resulting from immune damage. The sequence is that of Phosphoglycerate kinase (PGK) from Schistosoma mansoni (Blood fluke).